The primary structure comprises 116 residues: UPF0102 protein ELI_05985 (116 aa).

The protein belongs to the UPF0102 family.

In Erythrobacter litoralis (strain HTCC2594), this protein is UPF0102 protein ELI_05985.